A 128-amino-acid chain; its full sequence is Con-Ins F2b (128 aa).

Positions Met-1–Gly-24 are cleaved as a signal peptide. 4 disulfide bridges follow: Cys-29/Cys-104, Cys-41/Cys-107, Cys-53/Cys-120, and Cys-106/Cys-111. The propeptide at Leu-59 to Arg-89 is c peptide. At Glu-115 the chain carries 4-carboxyglutamate; partial. Ser-127 carries the serine amide modification.

Belongs to the insulin family. Heterodimer of A and B chains; disulfide-linked. In terms of tissue distribution, expressed by the venom gland.

The protein localises to the secreted. Functionally, this venom insulin facilitates prey capture by rapidly inducing hypoglycemic shock. Intraperitoneal injection of this peptide into zebrafish lowers blood glucose with the same potency than human insulin. In vivo, when applied to water, this peptide reduces overall locomotor activity of zebrafish larvae, observed as a significant decrease in the percentage of time spent swimming and movement frequency. The polypeptide is Con-Ins F2b (Conus floridulus (Cone snail)).